We begin with the raw amino-acid sequence, 596 residues long: Chloride intracellular channel protein 6 (596 aa).

Residues 1–360 (MAEATEPKEV…ALEEGDPGQE (360 aa)) form a disordered region. Residues 34-48 (LEGREASEEAAEAPR) are compositionally biased toward basic and acidic residues. S40 carries the phosphoserine modification. Residues 65–74 (GCGQDEGTGG) show a composition bias toward gly residues. Positions 83–98 (GPEAETPGASGAPGEA) are enriched in low complexity. Positions 118–130 (SAQQVQGMSSGLD) are enriched in polar residues. Positions 148 to 160 (DPTASEAGEEAES) are enriched in acidic residues. Low complexity-rich tracts occupy residues 197 to 213 (GSES…PQPQ) and 225 to 244 (GGNE…AGEG). Basic and acidic residues predominate over residues 246–290 (TLGKDGSEEAASEDARVDAHENGDQGKLQEETGEEEARPEPELKG). At S304 the chain carries Phosphoserine. Over residues 338-348 (ELGRVNGRREN) the composition is skewed to basic and acidic residues. Residues 379 to 382 (CPFS) carry the G-site motif. A helical membrane pass occupies residues 381-401 (FSQRLFMILWLKGVIFNVTTV). The GST C-terminal domain occupies 425-596 (DGEVKTDVNK…AYSDAAKRMK (172 aa)).

The protein belongs to the chloride channel CLIC family. As to quaternary structure, monomer (soluble state). Interacts with dopamine receptors DRD2, DRD3 and DRD4. Phosphorylated.

It localises to the cytoplasm. It is found in the cell membrane. It carries out the reaction chloride(in) = chloride(out). Channel activity is redox- and pH-regulated. Inhibited by IAA-94. Functionally, in the soluble state, catalyzes glutaredoxin-like thiol disulfide exchange reactions with reduced glutathione as electron donor. Can insert into membranes and form voltage-dependent chloride-selective channels. The channel opens upon membrane depolarization at positive voltages and closes at negative membrane voltages. May play a critical role in water-secreting cells, possibly through the regulation of chloride ion transport. This is Chloride intracellular channel protein 6 (Clic6) from Mus musculus (Mouse).